A 117-amino-acid chain; its full sequence is Thioredoxin (117 aa).

Residues 2 to 116 (AISLTEEDFV…FENIIKDFFG (115 aa)) enclose the Thioredoxin domain. Cysteine 40 and cysteine 43 are disulfide-bonded.

It belongs to the thioredoxin family.

Participates in various redox reactions through the reversible oxidation of its active center dithiol to a disulfide and catalyzes dithiol-disulfide exchange reactions. This Borreliella burgdorferi (strain ATCC 35210 / DSM 4680 / CIP 102532 / B31) (Borrelia burgdorferi) protein is Thioredoxin (trxA).